The sequence spans 198 residues: Ribonuclease HII (198 aa).

The 189-residue stretch at 10-198 (HLVAGVDEVG…PVRRALGIAS (189 aa)) folds into the RNase H type-2 domain. Positions 16, 17, and 108 each coordinate a divalent metal cation.

The protein belongs to the RNase HII family. Requires Mn(2+) as cofactor. It depends on Mg(2+) as a cofactor.

The protein localises to the cytoplasm. It catalyses the reaction Endonucleolytic cleavage to 5'-phosphomonoester.. Endonuclease that specifically degrades the RNA of RNA-DNA hybrids. The polypeptide is Ribonuclease HII (Cronobacter sakazakii (strain ATCC BAA-894) (Enterobacter sakazakii)).